An 807-amino-acid chain; its full sequence is Glycerol-3-phosphate acyltransferase (807 aa).

Positions 306–311 (HRSHMD) match the HXXXXD motif motif.

Belongs to the GPAT/DAPAT family.

Its subcellular location is the cell inner membrane. The enzyme catalyses sn-glycerol 3-phosphate + an acyl-CoA = a 1-acyl-sn-glycero-3-phosphate + CoA. Its pathway is phospholipid metabolism; CDP-diacylglycerol biosynthesis; CDP-diacylglycerol from sn-glycerol 3-phosphate: step 1/3. This Escherichia coli O157:H7 protein is Glycerol-3-phosphate acyltransferase (plsB).